The chain runs to 384 residues: BarH-like 2 homeobox protein (384 aa).

Disordered regions lie at residues Met1 to Thr134, Cys154 to Ser237, and Pro364 to Arg384. The segment covering Gln119–Thr134 has biased composition (low complexity). A compositionally biased stretch (basic and acidic residues) spans Glu177–Ser217. The segment at residues Pro229 to Thr288 is a DNA-binding region (homeobox).

It belongs to the BAR homeobox family. In terms of tissue distribution, expressed in the ganglion cell layer of the retina in the eye and in the ventral zone of the dorsal thalamus of the CNS.

The protein resides in the nucleus. Functionally, potential regulator of neural basic helix-loop-helix genes. It may down-regulate expression of ASCL1 and, within the thalamus, up-regulate NGN2, thereby regulating distinct patterns of neuronal differentiation. This chain is BarH-like 2 homeobox protein (Barhl2), found in Rattus norvegicus (Rat).